The primary structure comprises 763 residues: Photosystem I P700 chlorophyll a apoprotein A1 (763 aa).

8 helical membrane passes run 72 to 95 (IFSA…FHGA), 158 to 181 (LYVT…FHYH), 197 to 221 (LNHH…HVSL), 305 to 323 (TAHH…GHMY), 360 to 383 (WHAQ…HHMY), 399 to 425 (LSLF…IFMV), 447 to 469 (AIIS…LYIH), and 544 to 562 (FMVH…LILL). The [4Fe-4S] cluster site is built by C586 and C595. Helical transmembrane passes span 602-623 (HVFL…HYSW) and 677-699 (TSAY…MFLF). A chlorophyll a'-binding site is contributed by H688. Chlorophyll a contacts are provided by M696 and Y704. W705 provides a ligand contact to phylloquinone. Residues 737–757 (AVGVAHYLLGGIVTTWSFFLA) traverse the membrane as a helical segment.

The protein belongs to the PsaA/PsaB family. In terms of assembly, the PsaA/B heterodimer binds the P700 chlorophyll special pair and subsequent electron acceptors. PSI consists of a core antenna complex that captures photons, and an electron transfer chain that converts photonic excitation into a charge separation. The cyanobacterial PSI reaction center is composed of one copy each of PsaA,B,C,D,E,F,I,J,K,L,M and X, and forms trimeric complexes. PSI electron transfer chain: 5 chlorophyll a, 1 chlorophyll a', 2 phylloquinones and 3 4Fe-4S clusters. PSI core antenna: 90 chlorophyll a, 22 carotenoids, 3 phospholipids and 1 galactolipid. P700 is a chlorophyll a/chlorophyll a' dimer, A0 is one or more chlorophyll a, A1 is one or both phylloquinones and FX is a shared 4Fe-4S iron-sulfur center. is required as a cofactor.

It localises to the cellular thylakoid membrane. The catalysed reaction is reduced [plastocyanin] + hnu + oxidized [2Fe-2S]-[ferredoxin] = oxidized [plastocyanin] + reduced [2Fe-2S]-[ferredoxin]. Functionally, psaA and PsaB bind P700, the primary electron donor of photosystem I (PSI), as well as the electron acceptors A0, A1 and FX. PSI is a plastocyanin/cytochrome c6-ferredoxin oxidoreductase, converting photonic excitation into a charge separation, which transfers an electron from the donor P700 chlorophyll pair to the spectroscopically characterized acceptors A0, A1, FX, FA and FB in turn. Oxidized P700 is reduced on the lumenal side of the thylakoid membrane by plastocyanin or cytochrome c6. The protein is Photosystem I P700 chlorophyll a apoprotein A1 of Synechococcus elongatus (strain ATCC 33912 / PCC 7942 / FACHB-805) (Anacystis nidulans R2).